A 192-amino-acid chain; its full sequence is MAP6 domain-containing protein 1 (192 aa).

Residues Cys5, Cys10, and Cys11 are each lipidated (S-palmitoyl cysteine). Residues 36–106 (LESEEPIPGG…RTKPSATPGR (71 aa)) are disordered. Residue Ser38 is modified to Phosphoserine. Residues 43-58 (PGGVPSRRGPSPAGSR) are compositionally biased toward low complexity. Mn stretches follow at residues 123–136 (TTSYRQEFQAWTGV) and 158–170 (DGSPRAGFQAPEV). A Phosphoserine modification is found at Ser160.

It belongs to the STOP family. Interacts with calmodulin. Post-translationally, palmitoylated. Palmitoylation enhances association with microtubules.

Its subcellular location is the golgi apparatus. It localises to the cytoplasm. The protein localises to the cytoskeleton. In terms of biological role, may have microtubule-stabilizing activity. The chain is MAP6 domain-containing protein 1 (MAP6D1) from Bos taurus (Bovine).